We begin with the raw amino-acid sequence, 430 residues long: UDP-glucose 6-dehydrogenase AglM (430 aa).

The active site involves cysteine 269.

The protein belongs to the UDP-glucose/GDP-mannose dehydrogenase family.

The catalysed reaction is UDP-alpha-D-glucose + 2 NAD(+) + H2O = UDP-alpha-D-glucuronate + 2 NADH + 3 H(+). The protein operates within nucleotide-sugar biosynthesis; UDP-alpha-D-glucuronate biosynthesis; UDP-alpha-D-glucuronate from UDP-alpha-D-glucose: step 1/1. It participates in cell surface structure biogenesis; S-layer biogenesis. With respect to regulation, activity improves as salinity decreases. Functionally, involved in the assembly of a N-linked pentasaccharide that decorates the S-layer glycoprotein and flagellins. Involved in the biosynthesis of the hexuronic acids found at both positions 2 and 3 of the pentasaccharide. The polypeptide is UDP-glucose 6-dehydrogenase AglM (aglM) (Haloferax volcanii (strain ATCC 29605 / DSM 3757 / JCM 8879 / NBRC 14742 / NCIMB 2012 / VKM B-1768 / DS2) (Halobacterium volcanii)).